A 158-amino-acid polypeptide reads, in one-letter code: 3-dehydroquinate dehydratase (158 aa).

Catalysis depends on Tyr24, which acts as the Proton acceptor. The substrate site is built by Asn75, His81, and Asp88. Residue His101 is the Proton donor of the active site. Substrate-binding positions include 102–103 (LS) and Arg112.

Belongs to the type-II 3-dehydroquinase family. Homododecamer.

The enzyme catalyses 3-dehydroquinate = 3-dehydroshikimate + H2O. Its pathway is metabolic intermediate biosynthesis; chorismate biosynthesis; chorismate from D-erythrose 4-phosphate and phosphoenolpyruvate: step 3/7. In terms of biological role, catalyzes a trans-dehydration via an enolate intermediate. The sequence is that of 3-dehydroquinate dehydratase from Bartonella bacilliformis (strain ATCC 35685 / KC583 / Herrer 020/F12,63).